A 539-amino-acid chain; its full sequence is Chaperonin GroEL (539 aa).

ATP contacts are provided by residues 30 to 33 (TLGP), 87 to 91 (DGTTT), Gly414, 479 to 481 (DAL), and Asp495.

Belongs to the chaperonin (HSP60) family. In terms of assembly, forms a cylinder of 14 subunits composed of two heptameric rings stacked back-to-back. Interacts with the co-chaperonin GroES.

It localises to the cytoplasm. The enzyme catalyses ATP + H2O + a folded polypeptide = ADP + phosphate + an unfolded polypeptide.. Together with its co-chaperonin GroES, plays an essential role in assisting protein folding. The GroEL-GroES system forms a nano-cage that allows encapsulation of the non-native substrate proteins and provides a physical environment optimized to promote and accelerate protein folding. In Caldicellulosiruptor bescii (strain ATCC BAA-1888 / DSM 6725 / KCTC 15123 / Z-1320) (Anaerocellum thermophilum), this protein is Chaperonin GroEL.